The primary structure comprises 943 residues: Translation initiation factor IF-2 (943 aa).

Over residues 99–113 the composition is skewed to low complexity; that stretch reads VKAAQTQAAPVQPEQ. The disordered stretch occupies residues 99 to 354; the sequence is VKAAQTQAAP…LEPNQHAFQA (256 aa). A compositionally biased stretch (basic and acidic residues) spans 117–141; the sequence is DAVKARAEAAARAEARAKAEAEAAK. The segment covering 145-172 has biased composition (low complexity); it reads AKAGNKAKPAAQKPTEAKAETAPVAAET. Residues 173–197 show a composition bias toward basic and acidic residues; that stretch reads KPAEPKEKAVKPKHERNGKGKDAKK. The span at 200–215 shows a compositional bias: low complexity; that stretch reads KPAAPAVPQPVVSAEE. Over residues 216 to 250 the composition is skewed to basic and acidic residues; the sequence is QAQRDEEARRAAALRAHQEALLKEKQERQARREAM. Residues 251–264 are compositionally biased toward low complexity; sequence KQQAEQQAKAAQEA. 2 stretches are compositionally biased toward basic and acidic residues: residues 295 to 308 and 319 to 335; these read AKKE…DEGQ and GGRD…ERVR. The region spanning 443–612 is the tr-type G domain; sequence PRPPVVTVMG…LLEAEVLELT (170 aa). A G1 region spans residues 452–459; sequence GHVDHGKT. Position 452–459 (452–459) interacts with GTP; sequence GHVDHGKT. A G2 region spans residues 477 to 481; sequence GITQH. Residues 498–501 are G3; it reads DTPG. Residues 498 to 502 and 552 to 555 contribute to the GTP site; these read DTPGH and NKID. The G4 stretch occupies residues 552–555; the sequence is NKID. The G5 stretch occupies residues 588 to 590; the sequence is SAK.

It belongs to the TRAFAC class translation factor GTPase superfamily. Classic translation factor GTPase family. IF-2 subfamily.

Its subcellular location is the cytoplasm. Its function is as follows. One of the essential components for the initiation of protein synthesis. Protects formylmethionyl-tRNA from spontaneous hydrolysis and promotes its binding to the 30S ribosomal subunits. Also involved in the hydrolysis of GTP during the formation of the 70S ribosomal complex. The polypeptide is Translation initiation factor IF-2 (Neisseria gonorrhoeae (strain NCCP11945)).